The following is a 356-amino-acid chain: tRNA N6-adenosine threonylcarbamoyltransferase (356 aa).

His-131 and His-135 together coordinate Fe cation. Substrate-binding positions include 154-158 (LVSGG), Asp-187, Gly-200, and Asn-289. Asp-317 lines the Fe cation pocket.

The protein belongs to the KAE1 / TsaD family. It depends on Fe(2+) as a cofactor.

Its subcellular location is the cytoplasm. It catalyses the reaction L-threonylcarbamoyladenylate + adenosine(37) in tRNA = N(6)-L-threonylcarbamoyladenosine(37) in tRNA + AMP + H(+). Its function is as follows. Required for the formation of a threonylcarbamoyl group on adenosine at position 37 (t(6)A37) in tRNAs that read codons beginning with adenine. Is involved in the transfer of the threonylcarbamoyl moiety of threonylcarbamoyl-AMP (TC-AMP) to the N6 group of A37, together with TsaE and TsaB. TsaD likely plays a direct catalytic role in this reaction. In Ruthia magnifica subsp. Calyptogena magnifica, this protein is tRNA N6-adenosine threonylcarbamoyltransferase.